An 892-amino-acid polypeptide reads, in one-letter code: Translation initiation factor IF-2 (892 aa).

Residues 66–305 are disordered; it reads TRSTLNIPGT…SLQQGFQKPA (240 aa). The segment covering 68–82 has biased composition (polar residues); it reads STLNIPGTGGKSKSV. Composition is skewed to basic and acidic residues over residues 93 to 159 and 166 to 216; these read VKRD…KDKV and DMTK…EENK. Basic residues predominate over residues 254-269; that stretch reads GRGRNAKAARPAKKGK. Over residues 270–282 the composition is skewed to basic and acidic residues; the sequence is HAESKADREEARA. The tr-type G domain occupies 391–560; the sequence is PRAPVVTIMG…LLQAEVLELK (170 aa). The segment at 400–407 is G1; that stretch reads GHVDHGKT. 400-407 provides a ligand contact to GTP; that stretch reads GHVDHGKT. The tract at residues 425–429 is G2; it reads GITQH. A G3 region spans residues 446-449; that stretch reads DTPG. Residues 446–450 and 500–503 each bind GTP; these read DTPGH and NKID. The tract at residues 500-503 is G4; it reads NKID. The tract at residues 536–538 is G5; sequence SAK.

Belongs to the TRAFAC class translation factor GTPase superfamily. Classic translation factor GTPase family. IF-2 subfamily.

The protein resides in the cytoplasm. In terms of biological role, one of the essential components for the initiation of protein synthesis. Protects formylmethionyl-tRNA from spontaneous hydrolysis and promotes its binding to the 30S ribosomal subunits. Also involved in the hydrolysis of GTP during the formation of the 70S ribosomal complex. The chain is Translation initiation factor IF-2 from Salmonella typhi.